The primary structure comprises 289 residues: EISLNGYGRFGLQYVEDRGVGLEDTIISSRLRINIVGTTETDQGVTFGAKLRMQWDDGDAFAGTAGNAAQFWTSYNGVTVSVGNVDTAFDSVALTYDSEMGYEASSFGDAQSSFFAYNSKYDASGALDNYNGIAVTYSISGVNLYLSYVDPDQTVDSSLVTEEFGIAADWSNDMISLAAAYTTDAGGIVDNDIAFVGAAYKFNDAGTVGLNWYDNGLSTAGDQVTLYGNYAFGATTVRAYVSDIDRAGADTAYGIGADYQFAEGVKVSGSVQSGFANETVADVGVRFDF.

As to quaternary structure, homotrimer.

The protein resides in the cell outer membrane. Its function is as follows. Forms channels that allow the passive diffusion of small hydrophilic solutes up to an exclusion limit of about 0.6 kDa. The polypeptide is Porin (opmA) (Fuscovulum blasticum (Rhodobacter blasticus)).